The following is a 138-amino-acid chain: MRVTQGTFSFLPDLTNDQIRKQIQYAINKGWALSVEYTDDPHPRNSYWEMWGLPLFDVKDPAAIMFEVEACRKEKSNYYIKLLAFDSTKGVESTAMSFMVNRPAHEPGFVLRRIESNDRVQRYQIHSYATEKPEGERY.

The protein belongs to the RuBisCO small chain family. As to quaternary structure, heterohexadecamer of 8 large and 8 small subunits.

Its subcellular location is the plastid. The protein localises to the chloroplast. Functionally, ruBisCO catalyzes two reactions: the carboxylation of D-ribulose 1,5-bisphosphate, the primary event in carbon dioxide fixation, as well as the oxidative fragmentation of the pentose substrate in the photorespiration process. Both reactions occur simultaneously and in competition at the same active site. Although the small subunit is not catalytic it is essential for maximal activity. In Cyanidium caldarium (Red alga), this protein is Ribulose bisphosphate carboxylase small subunit.